The following is an 87-amino-acid chain: Small ribosomal subunit protein bS20 (87 aa).

Belongs to the bacterial ribosomal protein bS20 family.

In terms of biological role, binds directly to 16S ribosomal RNA. This chain is Small ribosomal subunit protein bS20, found in Alkaliphilus metalliredigens (strain QYMF).